We begin with the raw amino-acid sequence, 457 residues long: MIKRTVKNIAEMVKGTLANPQYEQTVIHGVATDTRKLEQHQLFIPLKGERFDGHSFVEQAFEAGVAAVLWDRSVPNPPENHAVILVDDTLTALQQLAKAYLQELGTRVIGVTGSNGKTTTKDMIHAVLGTQYRVHKTGGNFNNHIGLPLTVLAMPENTEIAVLEMGMSAKGEIDLLSRLANPDAAVITNIGESHMQDLGSREGIAEAKLEIINGLKEDGVLIYIGDEPLLQNAYSCQTKTYGTGTHNDYQLQDVSQSEEGTHFTIKGIENTFFIPILGKHNVMNAMAAIAAGAYFGIAPEDAAKGLSGLKVTGMRLELIKTDSGLSIINDAYNASPTSMKAAIQLTESLEGYGKKMLVLGDMLELGDLEETFHKECGAVISPDKIDRVFTYGKLGAFIAEGALKHFEKDRVSHYTEKKDLLQAVKENASKGDLILFKASRGMKLEEIVKDLIESPLS.

113 to 119 (GSNGKTT) contributes to the ATP binding site.

This sequence belongs to the MurCDEF family. MurF subfamily.

The protein resides in the cytoplasm. The enzyme catalyses D-alanyl-D-alanine + UDP-N-acetyl-alpha-D-muramoyl-L-alanyl-gamma-D-glutamyl-meso-2,6-diaminopimelate + ATP = UDP-N-acetyl-alpha-D-muramoyl-L-alanyl-gamma-D-glutamyl-meso-2,6-diaminopimeloyl-D-alanyl-D-alanine + ADP + phosphate + H(+). The protein operates within cell wall biogenesis; peptidoglycan biosynthesis. Its function is as follows. Involved in cell wall formation. Catalyzes the final step in the synthesis of UDP-N-acetylmuramoyl-pentapeptide, the precursor of murein. This Bacillus subtilis (strain 168) protein is UDP-N-acetylmuramoyl-tripeptide--D-alanyl-D-alanine ligase.